Here is a 524-residue protein sequence, read N- to C-terminus: Ribonuclease Y (524 aa).

Residues 3–23 traverse the membrane as a helical segment; the sequence is IVINLLLLVLAALVAFVAGFF. The region spanning 214-280 is the KH domain; sequence ALSVVHIQSD…KLTLKKLLAD (67 aa). The HD domain maps to 340 to 432; that stretch reads LLQHSREVAM…VDAANTISLS (93 aa).

It belongs to the RNase Y family.

The protein localises to the cell membrane. Functionally, endoribonuclease that initiates mRNA decay. The chain is Ribonuclease Y from Chlorobium chlorochromatii (strain CaD3).